Consider the following 230-residue polypeptide: Large ribosomal subunit protein uL1 (230 aa).

Belongs to the universal ribosomal protein uL1 family. In terms of assembly, part of the 50S ribosomal subunit.

Its function is as follows. Binds directly to 23S rRNA. The L1 stalk is quite mobile in the ribosome, and is involved in E site tRNA release. In terms of biological role, protein L1 is also a translational repressor protein, it controls the translation of the L11 operon by binding to its mRNA. In Bifidobacterium longum subsp. infantis (strain ATCC 15697 / DSM 20088 / JCM 1222 / NCTC 11817 / S12), this protein is Large ribosomal subunit protein uL1.